A 345-amino-acid polypeptide reads, in one-letter code: Ferrochelatase (345 aa).

Residues His215 and Glu296 each contribute to the Fe cation site.

It belongs to the ferrochelatase family.

The protein localises to the cytoplasm. It carries out the reaction heme b + 2 H(+) = protoporphyrin IX + Fe(2+). It functions in the pathway porphyrin-containing compound metabolism; protoheme biosynthesis; protoheme from protoporphyrin-IX: step 1/1. Functionally, catalyzes the ferrous insertion into protoporphyrin IX. The sequence is that of Ferrochelatase from Rhodopseudomonas palustris (strain HaA2).